The sequence spans 228 residues: Leucokinins (228 aa).

The first 18 residues, 1–18 (MAMLLQVALPLLAAVSWG), serve as a signal peptide directing secretion. Positions 19 to 164 (WELNENDDSL…PRFSPVSAIQ (146 aa)) are excised as a propeptide. A disordered region spans residues 80–118 (EFSENNEAEDKSPTSAQNTQEHIPGNNFPPPAASNPPVN). Residues Gly-180 and Gly-193 each carry the glycine amide modification. Positions 197 to 209 (NTGRVHRQPKVVI) are excised as a propeptide. Gly-217 carries the glycine amide modification. Positions 221–228 (NQKDDNVF) are excised as a propeptide.

Its subcellular location is the secreted. Functionally, stimulates both fluid secretion by the Malpighian tubules and hindgut contractions. Depolarize the transepithelial voltage of the Malpighian tubules in concentrations of less than 10(-9) M and increase the frequency of hindgut contractions at concentrations above 10(-8) M. In Aedes aegypti (Yellowfever mosquito), this protein is Leucokinins.